An 83-amino-acid polypeptide reads, in one-letter code: UPF0270 protein CGSHiEE_07180 (83 aa).

It belongs to the UPF0270 family.

This is UPF0270 protein CGSHiEE_07180 from Haemophilus influenzae (strain PittEE).